Here is a 310-residue protein sequence, read N- to C-terminus: D-alanine--D-alanine ligase (310 aa).

Residues 107–305 (KKVWQSAGLP…FSALVQSILA (199 aa)) enclose the ATP-grasp domain. 134–189 (EQLHCQDFVIKPALEGSSVGVSRVKNQEQLAAAIPFAGGARAKIMAEPWIVGRELT) lines the ATP pocket. Residues aspartate 259, glutamate 272, and asparagine 274 each contribute to the Mg(2+) site.

This sequence belongs to the D-alanine--D-alanine ligase family. Mg(2+) is required as a cofactor. Requires Mn(2+) as cofactor.

The protein localises to the cytoplasm. It carries out the reaction 2 D-alanine + ATP = D-alanyl-D-alanine + ADP + phosphate + H(+). The protein operates within cell wall biogenesis; peptidoglycan biosynthesis. Cell wall formation. This is D-alanine--D-alanine ligase from Dichelobacter nodosus (strain VCS1703A).